The sequence spans 535 residues: Arylsulfatase K (535 aa).

A signal peptide spans 1-22 (MLLLWLSVFAASALAAPDRGAG). The Ca(2+) site is built by D44 and C84. C84 acts as the Nucleophile in catalysis. At C84 the chain carries 3-oxoalanine (Cys). Residue N112 is glycosylated (N-linked (GlcNAc...) asparagine). Substrate is bound at residue K132. Residue N197 is glycosylated (N-linked (GlcNAc...) asparagine). H255 contacts substrate. N-linked (GlcNAc...) asparagine glycosylation is present at N266. Ca(2+)-binding residues include D317 and H318. N-linked (GlcNAc...) asparagine glycans are attached at residues N379, N417, and N502.

Belongs to the sulfatase family. It depends on Ca(2+) as a cofactor. In terms of processing, the conversion to 3-oxoalanine (also known as C-formylglycine, FGly), of a serine or cysteine residue in prokaryotes and of a cysteine residue in eukaryotes, is critical for catalytic activity. The 75-kDa precursor undergoes proteolytic processing to yield a 23 kDa form. Post-translationally, N-glycosylated with both high mannose and complex type sugars.

Its subcellular location is the secreted. The protein localises to the lysosome. It catalyses the reaction an aryl sulfate + H2O = a phenol + sulfate + H(+). The enzyme catalyses Hydrolysis of the 2-sulfate groups of the 2-O-sulfo-D-glucuronate residues of chondroitin sulfate, heparin and heparitin sulfate.. Catalyzes the hydrolysis of pseudosubstrates such as p-nitrocatechol sulfate and p-nitrophenyl sulfate. Catalyzes the hydrolysis of the 2-sulfate groups of the 2-O-sulfo-D-glucuronate residues of chondroitin sulfate, heparin and heparitin sulfate. Acts selectively on 2-sulfoglucuronate and lacks activity against 2-sulfoiduronate. This Canis lupus familiaris (Dog) protein is Arylsulfatase K (ARSK).